The primary structure comprises 245 residues: Phosducin (245 aa).

Residues methionine 1–glutamate 14 are compositionally biased toward acidic residues. The interval methionine 1–phenylalanine 68 is disordered. Residues methionine 1 to glutamate 241 form the Phosducin domain. Over residues arginine 59–phenylalanine 68 the composition is skewed to basic and acidic residues. Position 73 is a phosphoserine; by PKA (serine 73). The thioredoxin fold stretch occupies residues tyrosine 111–glutamate 245.

Belongs to the phosducin family. As to quaternary structure, interacts with CRX. Forms a complex with the beta and gamma subunits of the GTP-binding protein, transducin. Light-induced changes in cyclic nucleotide levels modulate the phosphorylation of this protein by cAMP kinase.

It is found in the cytoplasm. It localises to the cytosol. Its subcellular location is the nucleus. The protein resides in the cell projection. The protein localises to the cilium. It is found in the photoreceptor outer segment. It localises to the photoreceptor inner segment. Its function is as follows. Inhibits the transcriptional activation activity of the cone-rod homeobox CRX. May participate in the regulation of visual phototransduction or in the integration of photoreceptor metabolism. The sequence is that of Phosducin (PDC) from Felis catus (Cat).